We begin with the raw amino-acid sequence, 92 residues long: UPF0335 protein BMEI0289 (92 aa).

The protein belongs to the UPF0335 family.

The polypeptide is UPF0335 protein BMEI0289 (Brucella melitensis biotype 1 (strain ATCC 23456 / CCUG 17765 / NCTC 10094 / 16M)).